Here is a 414-residue protein sequence, read N- to C-terminus: Coenzyme A biosynthesis bifunctional protein CoaBC (414 aa).

The phosphopantothenoylcysteine decarboxylase stretch occupies residues 1 to 191; the sequence is MSARKRIVVG…ALPYDMAGVK (191 aa). Residues 192–414 are phosphopantothenate--cysteine ligase; that stretch reads ALVTAGGTRE…IAAFLKSQDG (223 aa). Residues 275 to 277, D281, K291, 293 to 294, 308 to 311, F332, K350, and K354 each bind CTP; these read MAA, KK, and DDVL.

This sequence in the N-terminal section; belongs to the HFCD (homo-oligomeric flavin containing Cys decarboxylase) superfamily. It in the C-terminal section; belongs to the PPC synthetase family. In terms of assembly, homododecamer. Mg(2+) serves as cofactor. The cofactor is FMN.

The enzyme catalyses N-[(R)-4-phosphopantothenoyl]-L-cysteine + H(+) = (R)-4'-phosphopantetheine + CO2. It carries out the reaction (R)-4'-phosphopantothenate + L-cysteine + CTP = N-[(R)-4-phosphopantothenoyl]-L-cysteine + CMP + diphosphate + H(+). It functions in the pathway cofactor biosynthesis; coenzyme A biosynthesis; CoA from (R)-pantothenate: step 2/5. The protein operates within cofactor biosynthesis; coenzyme A biosynthesis; CoA from (R)-pantothenate: step 3/5. Its activity is regulated as follows. Two related chemical scaffolds that potently inhibit the activity of the CoaB moiety of CoaBC through a cryptic allosteric site that sits in the dimer interface region of the CoaB enzyme were identified. Functionally, catalyzes two sequential steps in the biosynthesis of coenzyme A. In the first step cysteine is conjugated to 4'-phosphopantothenate to form 4-phosphopantothenoylcysteine. In the second step the latter compound is decarboxylated to form 4'-phosphopantotheine. This chain is Coenzyme A biosynthesis bifunctional protein CoaBC, found in Mycolicibacterium smegmatis (strain ATCC 700084 / mc(2)155) (Mycobacterium smegmatis).